The primary structure comprises 196 residues: Peptidyl-tRNA hydrolase (196 aa).

A tRNA-binding site is contributed by tyrosine 18. Residue histidine 23 is the Proton acceptor of the active site. TRNA is bound by residues phenylalanine 69, asparagine 71, and asparagine 117.

Belongs to the PTH family. In terms of assembly, monomer.

The protein resides in the cytoplasm. The catalysed reaction is an N-acyl-L-alpha-aminoacyl-tRNA + H2O = an N-acyl-L-amino acid + a tRNA + H(+). In terms of biological role, hydrolyzes ribosome-free peptidyl-tRNAs (with 1 or more amino acids incorporated), which drop off the ribosome during protein synthesis, or as a result of ribosome stalling. Functionally, catalyzes the release of premature peptidyl moieties from peptidyl-tRNA molecules trapped in stalled 50S ribosomal subunits, and thus maintains levels of free tRNAs and 50S ribosomes. The polypeptide is Peptidyl-tRNA hydrolase (Aliivibrio salmonicida (strain LFI1238) (Vibrio salmonicida (strain LFI1238))).